The chain runs to 39 residues: Photosystem II reaction center protein J (39 aa).

The chain crosses the membrane as a helical span at residues 7-27 (IPLWIVAVVAGMGVIAVVGIF).

Belongs to the PsbJ family. As to quaternary structure, PSII is composed of 1 copy each of membrane proteins PsbA, PsbB, PsbC, PsbD, PsbE, PsbF, PsbH, PsbI, PsbJ, PsbK, PsbL, PsbM, PsbT, PsbX, PsbY, PsbZ, Psb30/Ycf12, peripheral proteins PsbO, CyanoQ (PsbQ), PsbU, PsbV and a large number of cofactors. It forms dimeric complexes.

It is found in the cellular thylakoid membrane. Its function is as follows. This protein is a component of the reaction center of photosystem II. Functionally, one of the components of the core complex of photosystem II (PSII). PSII is a light-driven water:plastoquinone oxidoreductase that uses light energy to abstract electrons from H(2)O, generating O(2) and a proton gradient subsequently used for ATP formation. It consists of a core antenna complex that captures photons, and an electron transfer chain that converts photonic excitation into a charge separation. The chain is Photosystem II reaction center protein J from Picosynechococcus sp. (strain ATCC 27264 / PCC 7002 / PR-6) (Agmenellum quadruplicatum).